A 451-amino-acid chain; its full sequence is mRNA cleavage and polyadenylation factor CLP1 (451 aa).

ATP contacts are provided by residues Glu33, Lys72, and 133 to 138 (NTGKTA).

Belongs to the Clp1 family. Clp1 subfamily. Component of a pre-mRNA cleavage factor complex. Interacts directly with PCF11.

The protein resides in the nucleus. In terms of biological role, required for endonucleolytic cleavage during polyadenylation-dependent pre-mRNA 3'-end formation. The chain is mRNA cleavage and polyadenylation factor CLP1 from Vanderwaltozyma polyspora (strain ATCC 22028 / DSM 70294 / BCRC 21397 / CBS 2163 / NBRC 10782 / NRRL Y-8283 / UCD 57-17) (Kluyveromyces polysporus).